Consider the following 510-residue polypeptide: Putative folylpolyglutamate synthase (510 aa).

An ATP-binding site is contributed by 98-101 (GKGS). The Mg(2+) site is built by Ser-122, Glu-189, and His-217. ATP contacts are provided by Arg-342 and Asp-357.

The protein belongs to the folylpolyglutamate synthase family. It depends on a monovalent cation as a cofactor.

It localises to the mitochondrion inner membrane. Its subcellular location is the mitochondrion matrix. The protein resides in the cytoplasm. It carries out the reaction (6S)-5,6,7,8-tetrahydrofolyl-(gamma-L-Glu)(n) + L-glutamate + ATP = (6S)-5,6,7,8-tetrahydrofolyl-(gamma-L-Glu)(n+1) + ADP + phosphate + H(+). It functions in the pathway cofactor biosynthesis; tetrahydrofolylpolyglutamate biosynthesis. Functionally, catalyzes conversion of folates to polyglutamate derivatives allowing concentration of folate compounds in the cell and the intracellular retention of these cofactors, which are important substrates for most of the folate-dependent enzymes that are involved in one-carbon transfer reactions involved in purine, pyrimidine and amino acid synthesis. This Caenorhabditis elegans protein is Putative folylpolyglutamate synthase.